The chain runs to 257 residues: Ribonuclease HII (257 aa).

Residues 72-257 form the RNase H type-2 domain; it reads ERVAGIDEVG…FSPVQKILQA (186 aa). The a divalent metal cation site is built by Asp-78, Glu-79, and Asp-170.

It belongs to the RNase HII family. Mn(2+) is required as a cofactor. It depends on Mg(2+) as a cofactor.

It is found in the cytoplasm. It carries out the reaction Endonucleolytic cleavage to 5'-phosphomonoester.. Endonuclease that specifically degrades the RNA of RNA-DNA hybrids. This is Ribonuclease HII from Levilactobacillus brevis (strain ATCC 367 / BCRC 12310 / CIP 105137 / JCM 1170 / LMG 11437 / NCIMB 947 / NCTC 947) (Lactobacillus brevis).